A 414-amino-acid chain; its full sequence is Ribulose bisphosphate carboxylase large chain (414 aa).

The substrate site is built by asparagine 101 and threonine 151. Catalysis depends on lysine 153, which acts as the Proton acceptor. Substrate is bound at residue lysine 155. The Mg(2+) site is built by lysine 179, aspartate 181, and glutamate 182. Lysine 179 is modified (N6-carboxylysine). The active-site Proton acceptor is histidine 272. Positions 273, 305, and 357 each coordinate substrate.

Belongs to the RuBisCO large chain family. Type I subfamily. As to quaternary structure, heterohexadecamer of 8 large chains and 8 small chains; disulfide-linked. The disulfide link is formed within the large subunit homodimers. It depends on Mg(2+) as a cofactor. The disulfide bond which can form in the large chain dimeric partners within the hexadecamer appears to be associated with oxidative stress and protein turnover.

Its subcellular location is the plastid. It is found in the chloroplast. It catalyses the reaction 2 (2R)-3-phosphoglycerate + 2 H(+) = D-ribulose 1,5-bisphosphate + CO2 + H2O. The enzyme catalyses D-ribulose 1,5-bisphosphate + O2 = 2-phosphoglycolate + (2R)-3-phosphoglycerate + 2 H(+). Its function is as follows. RuBisCO catalyzes two reactions: the carboxylation of D-ribulose 1,5-bisphosphate, the primary event in carbon dioxide fixation, as well as the oxidative fragmentation of the pentose substrate in the photorespiration process. Both reactions occur simultaneously and in competition at the same active site. This is Ribulose bisphosphate carboxylase large chain (rbcL) from Onychium japonicum (Japanese claw fern).